We begin with the raw amino-acid sequence, 710 residues long: Exocyst complex component 5 (710 aa).

A coiled-coil region spans residues 44 to 96 (DTFIQTIKDLKILQEKQQSKCERLEESLRQEKESHAKKIAKLQERHQTAIDVF).

Belongs to the SEC10 family. The exocyst complex is composed of Sec3/Exoc1, Sec5/Exoc2, Sec6/Exoc3, Sec8/Exoc4, Sec10/Exoc5, Sec15/Exoc6, Exo70/Exoc7 and Exo84/Exoc8.

In terms of biological role, component of the exocyst complex involved in the docking of exocytic vesicles with fusion sites on the plasma membrane. The protein is Exocyst complex component 5 of Drosophila melanogaster (Fruit fly).